We begin with the raw amino-acid sequence, 351 residues long: Alternative oxidase, mitochondrial (351 aa).

Residues 147–167 form a helical membrane-spanning segment; that stretch reads LTRFIFLESVAGVPGMVGGML. Fe cation is bound by residues Glu154, Glu193, and His196. The chain crosses the membrane as a helical span at residues 212–232; the sequence is LMVLGAQGVFFNGFFLSYLMS. Residues Glu244, Glu245, Glu299, and His302 each coordinate Fe cation. Residues 322–351 form a disordered region; it reads AAKYKDPTKAHPNKGIADLKPTGWEREEVI.

The protein belongs to the alternative oxidase family. The cofactor is Fe cation.

It is found in the mitochondrion inner membrane. Its function is as follows. Catalyzes cyanide-resistant oxygen consumption. May increase respiration when the cytochrome respiratory pathway is restricted, or in response to low temperatures. This chain is Alternative oxidase, mitochondrial (aox1), found in Aspergillus niger.